The chain runs to 455 residues: MAGVKLQERAAVVGIGISNMALIRYLVARGVRVTACDRTSAEKLGERAAELARLGVPLVAGEGYLEPLADHDLIFLTPGMPKHLPEIEAARRRGAAISGEIGLVLDLCRAPVIGVTGSAGKTTTTTLIGEILRAAGRETYVGGNIGKPLIEQVEAIPSEAVVVLELSSFQLQLVHRSPHIAVVTNVSPNHLDVHATMEEYVEAKKAIFRRQSPADWLVLNADDPTVRAFAAEARSRVVLFSRRADPGGRDAAFVREDRVIWRRGGRETPILFLDEIRLPGLHNQENVLAAVAACFLAGAPLSAVREVVTQFTGVEHRIEPVRVLDGVKWYNDSKATSPAEAVAALTTLPAPIVLIAGGSDKGIPFDPIAPLVAEKVKTLILMGPTAPKIEEAVRRGGYAGPIRRAADMAEAVALAREAAAPGDTVLLSPACASFDAYRNFEERGRHFKSLVEALS.

Position 117-123 (117-123 (GSAGKTT)) interacts with ATP.

This sequence belongs to the MurCDEF family.

The protein resides in the cytoplasm. It catalyses the reaction UDP-N-acetyl-alpha-D-muramoyl-L-alanine + D-glutamate + ATP = UDP-N-acetyl-alpha-D-muramoyl-L-alanyl-D-glutamate + ADP + phosphate + H(+). It functions in the pathway cell wall biogenesis; peptidoglycan biosynthesis. Cell wall formation. Catalyzes the addition of glutamate to the nucleotide precursor UDP-N-acetylmuramoyl-L-alanine (UMA). This chain is UDP-N-acetylmuramoylalanine--D-glutamate ligase, found in Symbiobacterium thermophilum (strain DSM 24528 / JCM 14929 / IAM 14863 / T).